A 464-amino-acid polypeptide reads, in one-letter code: Cysteine--tRNA ligase (464 aa).

Cys29 contributes to the Zn(2+) binding site. The 'HIGH' region signature appears at 31-41 (ATVQGDPHIGH). 3 residues coordinate Zn(2+): Cys207, His232, and Glu236. Residues 263 to 267 (KMSKS) carry the 'KMSKS' region motif. Lys266 serves as a coordination point for ATP.

The protein belongs to the class-I aminoacyl-tRNA synthetase family. As to quaternary structure, monomer. Requires Zn(2+) as cofactor.

It is found in the cytoplasm. The catalysed reaction is tRNA(Cys) + L-cysteine + ATP = L-cysteinyl-tRNA(Cys) + AMP + diphosphate. This Rhodococcus opacus (strain B4) protein is Cysteine--tRNA ligase.